A 414-amino-acid polypeptide reads, in one-letter code: Serine hydroxymethyltransferase (414 aa).

Residues Leu121 and 125-127 (GHL) each bind (6S)-5,6,7,8-tetrahydrofolate. At Lys229 the chain carries N6-(pyridoxal phosphate)lysine.

The protein belongs to the SHMT family. Homodimer. It depends on pyridoxal 5'-phosphate as a cofactor.

It localises to the cytoplasm. It carries out the reaction (6R)-5,10-methylene-5,6,7,8-tetrahydrofolate + glycine + H2O = (6S)-5,6,7,8-tetrahydrofolate + L-serine. The protein operates within one-carbon metabolism; tetrahydrofolate interconversion. It participates in amino-acid biosynthesis; glycine biosynthesis; glycine from L-serine: step 1/1. Functionally, catalyzes the reversible interconversion of serine and glycine with tetrahydrofolate (THF) serving as the one-carbon carrier. This reaction serves as the major source of one-carbon groups required for the biosynthesis of purines, thymidylate, methionine, and other important biomolecules. Also exhibits THF-independent aldolase activity toward beta-hydroxyamino acids, producing glycine and aldehydes, via a retro-aldol mechanism. The chain is Serine hydroxymethyltransferase from Polynucleobacter necessarius subsp. necessarius (strain STIR1).